Consider the following 336-residue polypeptide: Phytochrome A-associated F-box protein (336 aa).

The F-box domain occupies 3–55; that stretch reads ESVFSCIPEDVVFNIFFKLQDDPRNWARLACVCTKFSSIVRNVCCKTQCYSAI. The short motif at 197 to 201 is the Nuclear localization signal element; that stretch reads RKRRK.

Probable component of an E3 ubiquitin ligase SCF complex. Interacts with SKP1A/ASK1 and SKP1B/ASK2.

It localises to the nucleus. The protein operates within protein modification; protein ubiquitination. Functionally, component of SCF(ASK-cullin-F-box) E3 ubiquitin ligase complexes, which may mediate the ubiquitination and subsequent proteasomal degradation of target proteins. Negative regulator of the phyA signaling pathway that shifts the responsiveness of the phyA signaling system associated with hypocotyl elongation from red to far-red wavelength. This is Phytochrome A-associated F-box protein (EID1) from Arabidopsis thaliana (Mouse-ear cress).